We begin with the raw amino-acid sequence, 381 residues long: 1-deoxy-D-xylulose 5-phosphate reductoisomerase (381 aa).

NADPH-binding residues include Thr-10, Gly-11, Ser-12, Ile-13, Gly-36, Lys-37, Asn-38, and Asn-122. 1-deoxy-D-xylulose 5-phosphate is bound at residue Lys-123. An NADPH-binding site is contributed by Glu-124. Mn(2+) is bound at residue Asp-148. Positions 149, 150, 173, and 196 each coordinate 1-deoxy-D-xylulose 5-phosphate. Glu-150 is a binding site for Mn(2+). Position 202 (Gly-202) interacts with NADPH. Residues Ser-209, Asn-214, Lys-215, and Glu-218 each coordinate 1-deoxy-D-xylulose 5-phosphate. Glu-218 contributes to the Mn(2+) binding site.

This sequence belongs to the DXR family. Requires Mg(2+) as cofactor. Mn(2+) is required as a cofactor.

It catalyses the reaction 2-C-methyl-D-erythritol 4-phosphate + NADP(+) = 1-deoxy-D-xylulose 5-phosphate + NADPH + H(+). Its pathway is isoprenoid biosynthesis; isopentenyl diphosphate biosynthesis via DXP pathway; isopentenyl diphosphate from 1-deoxy-D-xylulose 5-phosphate: step 1/6. Its function is as follows. Catalyzes the NADPH-dependent rearrangement and reduction of 1-deoxy-D-xylulose-5-phosphate (DXP) to 2-C-methyl-D-erythritol 4-phosphate (MEP). This Desulfitobacterium hafniense (strain DSM 10664 / DCB-2) protein is 1-deoxy-D-xylulose 5-phosphate reductoisomerase.